A 493-amino-acid polypeptide reads, in one-letter code: MTLRFYDTATAEVRDFAPLVEGKASLYYCGATVQSEPHIGHLRSALVFDQLTRWLQFRGFQTTVVRNVTDIDDKILAKAAEAGEEWWARAYKYEQQFNAAYDKLGITRPDYEPRATGNISEMHSLIQDLIDRGHAYPAPDGSGDVYFDVRSWGKYGSLTHQNIDDMQAAADADPRGKKDARDFALWKGRKPEEPTTASWPSPWGAGRPGWHLECSAMVGKYLGDAFDIHGGGLDLRFPHHENEMAQSQAAGRPFANFWMHNGLVAYQGEKMSKSIGNVIGPGELFAQASPRVVRYYLGQAHYRSVLDYSPESLEEAAAALARIDGFLVNAGANVQRVEVEDSGHMYLPPAAKQGFGWFAYAPLSDTPAAFVEAMDDDLNVPKALAVLHETVRAGNSAIASSDLVELQKKFEAVLAMLDVLGLSSIATDQAADNGSTHALETLVQTRLQERQQARTEKNWARSDEIRDELAEAGIKIEDSSNGATWSIERKQQR.

Residue Cys29 participates in Zn(2+) binding. The 'HIGH' region signature appears at 31 to 41 (ATVQSEPHIGH). Residues Cys214, His239, and Glu243 each coordinate Zn(2+). A 'KMSKS' region motif is present at residues 270–274 (KMSKS). Position 273 (Lys273) interacts with ATP.

Belongs to the class-I aminoacyl-tRNA synthetase family. In terms of assembly, monomer. It depends on Zn(2+) as a cofactor.

It is found in the cytoplasm. The enzyme catalyses tRNA(Cys) + L-cysteine + ATP = L-cysteinyl-tRNA(Cys) + AMP + diphosphate. The chain is Cysteine--tRNA ligase from Renibacterium salmoninarum (strain ATCC 33209 / DSM 20767 / JCM 11484 / NBRC 15589 / NCIMB 2235).